Here is a 107-residue protein sequence, read N- to C-terminus: Metallothionein-1 (107 aa).

The propeptide occupies 1–2 (MD).

This sequence belongs to the metallothionein superfamily. Type 7 family.

In terms of biological role, the metallothioneins are involved in the cellular sequestration of toxic metal ions. Binds 12 cadmium ions per molecule. The chain is Metallothionein-1 from Tetrahymena pigmentosa.